Consider the following 428-residue polypeptide: Histidine--tRNA ligase (428 aa).

Belongs to the class-II aminoacyl-tRNA synthetase family. In terms of assembly, homodimer.

The protein resides in the cytoplasm. The enzyme catalyses tRNA(His) + L-histidine + ATP = L-histidyl-tRNA(His) + AMP + diphosphate + H(+). This chain is Histidine--tRNA ligase, found in Sorangium cellulosum (strain So ce56) (Polyangium cellulosum (strain So ce56)).